Here is a 160-residue protein sequence, read N- to C-terminus: Large ribosomal subunit protein uL22c (160 aa).

It belongs to the universal ribosomal protein uL22 family. Part of the 50S ribosomal subunit.

It is found in the plastid. Its subcellular location is the chloroplast. In terms of biological role, this protein binds specifically to 23S rRNA. Its function is as follows. The globular domain of the protein is located near the polypeptide exit tunnel on the outside of the subunit, while an extended beta-hairpin is found that lines the wall of the exit tunnel in the center of the 70S ribosome. The sequence is that of Large ribosomal subunit protein uL22c (rpl22) from Crucihimalaya wallichii (Rock-cress).